A 343-amino-acid polypeptide reads, in one-letter code: Protein RecA (343 aa).

64-71 (GPESSGKT) is an ATP binding site.

The protein belongs to the RecA family.

It is found in the cytoplasm. In terms of biological role, can catalyze the hydrolysis of ATP in the presence of single-stranded DNA, the ATP-dependent uptake of single-stranded DNA by duplex DNA, and the ATP-dependent hybridization of homologous single-stranded DNAs. It interacts with LexA causing its activation and leading to its autocatalytic cleavage. This chain is Protein RecA, found in Bacillus cereus (strain ATCC 10987 / NRS 248).